A 108-amino-acid polypeptide reads, in one-letter code: UPF0060 membrane protein Mflv_3127 (108 aa).

Helical transmembrane passes span L7–F27, G32–F52, V61–D81, and R87–P107.

This sequence belongs to the UPF0060 family.

It is found in the cell membrane. This is UPF0060 membrane protein Mflv_3127 from Mycolicibacterium gilvum (strain PYR-GCK) (Mycobacterium gilvum (strain PYR-GCK)).